Consider the following 819-residue polypeptide: Molybdenum cofactor sulfurase (819 aa).

The residue at position 271 (Lys271) is an N6-(pyridoxal phosphate)lysine. The active site involves Cys430. In terms of domain architecture, MOSC spans 650-817; sequence CKLLRYSSST…IGVGEEVNPD (168 aa).

This sequence belongs to the class-V pyridoxal-phosphate-dependent aminotransferase family. MOCOS subfamily. Pyridoxal 5'-phosphate serves as cofactor. Ubiquitously expressed.

It catalyses the reaction Mo-molybdopterin + L-cysteine + AH2 = thio-Mo-molybdopterin + L-alanine + A + H2O. Its pathway is cofactor biosynthesis; molybdopterin biosynthesis. Sulfurates the molybdenum cofactor. Sulfation of molybdenum is essential for xanthine dehydrogenase (XDH) and aldehyde oxidase (ADO) enzymes in which molybdenum cofactor is liganded by 1 oxygen and 1 sulfur atom in active form. Modulates cold stress- and osmotic stress-responsive gene expression by acting as key regulator of abscisic acid (ABA) biosynthesis. The sequence is that of Molybdenum cofactor sulfurase (ABA3) from Arabidopsis thaliana (Mouse-ear cress).